We begin with the raw amino-acid sequence, 1027 residues long: C2 and GRAM domain-containing protein At5g50170 (1027 aa).

The region spanning 1–103 (MRLYVYILQA…ENQTLLPTWF (103 aa)) is the C2 1 domain. Residues 158–167 (SPKDLISSRD) are compositionally biased toward basic and acidic residues. Disordered regions lie at residues 158–177 (SPKD…HDGK) and 201–223 (LHDE…DQCS). Positions 168-177 (GKRRKHHDGK) are enriched in basic residues. Residues 206-223 (SVGQSVNSNYEDATDQCS) are compositionally biased toward polar residues. One can recognise a VASt 1 domain in the interval 253–426 (TGGVLVDQKY…LLAKTYKTLD (174 aa)). Residues 452 to 472 (FLYFWSSSVICAVLLSVYVVV) traverse the membrane as a helical segment. The 124-residue stretch at 516-639 (TVHFVQARLH…TADELADLSV (124 aa)) folds into the C2 2 domain. In terms of domain architecture, GRAM spans 693–756 (AFQKLFGLPH…LWEDIDDIQV (64 aa)). The VASt 2 domain occupies 855–1018 (MMSKVYTCDL…VIFDLFQKES (164 aa)).

Its subcellular location is the membrane. In Arabidopsis thaliana (Mouse-ear cress), this protein is C2 and GRAM domain-containing protein At5g50170.